Reading from the N-terminus, the 429-residue chain is Enolase (429 aa).

Gln167 lines the (2R)-2-phosphoglycerate pocket. Glu209 functions as the Proton donor in the catalytic mechanism. Mg(2+) contacts are provided by Asp246, Glu289, and Asp316. Residues Lys341, Arg370, Ser371, and Lys392 each contribute to the (2R)-2-phosphoglycerate site. Residue Lys341 is the Proton acceptor of the active site.

It belongs to the enolase family. As to quaternary structure, component of the RNA degradosome, a multiprotein complex involved in RNA processing and mRNA degradation. Mg(2+) is required as a cofactor.

The protein localises to the cytoplasm. Its subcellular location is the secreted. It is found in the cell surface. The catalysed reaction is (2R)-2-phosphoglycerate = phosphoenolpyruvate + H2O. Its pathway is carbohydrate degradation; glycolysis; pyruvate from D-glyceraldehyde 3-phosphate: step 4/5. Functionally, catalyzes the reversible conversion of 2-phosphoglycerate (2-PG) into phosphoenolpyruvate (PEP). It is essential for the degradation of carbohydrates via glycolysis. This is Enolase from Pseudomonas aeruginosa (strain LESB58).